Consider the following 528-residue polypeptide: Potassium voltage-gated channel subfamily A member 3 (528 aa).

The segment at 1 to 32 (MTVVPGDHLLEPEAAGGGGGDPPQGGCGSGGG) is disordered. Over 1-187 (MTVVPGDHLL…EYPESSGPAR (187 aa)) the chain is Cytoplasmic. The span at 15–32 (AGGGGGDPPQGGCGSGGG) shows a compositional bias: gly residues. Residues 188–206 (GIAIVSVLVILISIVIFCL) form a helical membrane-spanning segment. Residues 207–247 (ETLPEFRDEKDYPASPSQDVFEAANNSTSGAPSGASSFSDP) are Extracellular-facing. An N-linked (GlcNAc...) asparagine glycan is attached at asparagine 232. Residues 248 to 269 (FFVVETLCIIWFSFELLVRFFA) form a helical membrane-spanning segment. Residue cysteine 270 is the site of S-palmitoyl cysteine attachment. Over 270–280 (CPSKATFSRNI) the chain is Cytoplasmic. The chain crosses the membrane as a helical span at residues 281-301 (MNLIDIVAIIPYFITLGTELA). Over 302–315 (ERQGNGQQAMSLAI) the chain is Extracellular. A helical; Voltage-sensor transmembrane segment spans residues 316–334 (LRVIRLVRVFRIFKLSRHS). The Cytoplasmic segment spans residues 335–350 (KGLQILGQTLKASMRE). Residues 351-370 (LGLLIFFLFIGVILFSSAVY) form a helical membrane-spanning segment. At 371 to 411 (FAEADDPSSGFNSIPDAFWWAVVTMTTVGYGDMHPVTIGGK) the chain is on the extracellular side. Residues 397–402 (TVGYGD) carry the Selectivity filter motif. A helical membrane pass occupies residues 412–434 (IVGSLCAIAGVLTIALPVPVIVS). The Cytoplasmic portion of the chain corresponds to 435–528 (NFNYFYHRET…VNIKKIFTDV (94 aa)). The tract at residues 435-528 (NFNYFYHRET…VNIKKIFTDV (94 aa)) is interaction with KCNE4. The residue at position 452 (tyrosine 452) is a Phosphotyrosine. Serine 473 is subject to Phosphoserine; by PKA. Residues 526–528 (TDV) carry the PDZ-binding motif.

It belongs to the potassium channel family. A (Shaker) (TC 1.A.1.2) subfamily. Kv1.3/KCNA3 sub-subfamily. Homotetramer. Forms heterooligomers with KCNE4 which inhibits KCNA3 activity by impairing localization to the cell membrane. The stoichiometry of KCNA3 and KCNE4 in the heterooligomers are 4:1, 4:2, 4:3 or 4:4 respectively. Increasing the number of KCNE4 subunits steadily slows the activation KCNA3 and decreases its abundance at the cell membrane. However, a single subunit of KCNE4 is sufficient for the cooperative enhancement of the inactivating function of the channel. Interacts with SEC24D; this interaction is reduced in the presence of KCNE4. Interacts with DLG1, DLG2 and DLG4 via their PDZ domains. Post-translationally, N-glycosylation promotes the cell surface expression. In terms of processing, phosphorylation on Tyr-452 inhibits its channel activity.

The protein resides in the cell membrane. It carries out the reaction K(+)(in) = K(+)(out). Activity is up-regulated by JAK2. Mediates the voltage-dependent potassium ion permeability of excitable membranes. Assuming opened or closed conformations in response to the voltage difference across the membrane, the protein forms a potassium-selective channel through which potassium ions may pass in accordance with their electrochemical gradient. The polypeptide is Potassium voltage-gated channel subfamily A member 3 (Kcna3) (Mus musculus (Mouse)).